Reading from the N-terminus, the 384-residue chain is Prokineticin receptor 2 (384 aa).

Residues methionine 1–isoleucine 54 lie on the Extracellular side of the membrane. Residues asparagine 7 and asparagine 27 are each glycosylated (N-linked (GlcNAc...) asparagine). Residues valine 55–isoleucine 75 form a helical membrane-spanning segment. Over alanine 76–asparagine 89 the chain is Cytoplasmic. Residues leucine 90–glutamate 110 traverse the membrane as a helical segment. The Extracellular segment spans residues methionine 111 to threonine 136. Cysteines 128 and 208 form a disulfide. Residues valine 137–isoleucine 157 traverse the membrane as a helical segment. At valine 158–serine 171 the chain is on the cytoplasmic side. A helical membrane pass occupies residues phenylalanine 172 to alanine 192. The Extracellular segment spans residues threonine 193–tyrosine 223. The chain crosses the membrane as a helical span at residues phenylalanine 224 to alanine 244. Residues arginine 245–threonine 273 lie on the Cytoplasmic side of the membrane. Residues valine 274–phenylalanine 294 traverse the membrane as a helical segment. Residues threonine 295–threonine 313 are Extracellular-facing. Residues alanine 314–valine 334 form a helical membrane-spanning segment. Residues threonine 335–lysine 384 lie on the Cytoplasmic side of the membrane.

It belongs to the G-protein coupled receptor 1 family. As to quaternary structure, homodimer. As to expression, expressed in the ileocecum, thyroid gland, pituitary gland, salivary gland, adrenal gland, testis, ovary and brain.

The protein resides in the cell membrane. Its function is as follows. Receptor for prokineticin 2. Exclusively coupled to the G(q) subclass of heteromeric G proteins. Activation leads to mobilization of calcium, stimulation of phosphoinositide turnover and activation of p44/p42 mitogen-activated protein kinase. The chain is Prokineticin receptor 2 (PROKR2) from Homo sapiens (Human).